Consider the following 583-residue polypeptide: Cysteine/serine-rich nuclear protein 1 (583 aa).

2 disordered regions span residues 1–79 (MTGL…APRE) and 306–381 (AESL…RSGV). Positions 18–41 (SSSSSSSFSSRLSLSSFPASSASP) are enriched in low complexity. Positions 54-69 (APQSDQDSCGLQSFTP) are enriched in polar residues. Low complexity predominate over residues 335–361 (PVSSELGDSSCSSDMTDSSTTLSSGSS). The span at 364–373 (PNHPAHPSLP) shows a compositional bias: pro residues.

This sequence belongs to the AXUD1 family. In terms of tissue distribution, widely expressed with highest levels in thymus and lung. Low levels detected in naive T-cells.

It localises to the nucleus. Its function is as follows. Binds to the consensus sequence 5'-AGAGTG-3' and has transcriptional activator activity. May have a tumor-suppressor function. May play a role in apoptosis. This chain is Cysteine/serine-rich nuclear protein 1 (Csrnp1), found in Mus musculus (Mouse).